A 374-amino-acid chain; its full sequence is Cell division protein DivIB (374 aa).

The disordered stretch occupies residues methionine 1–proline 90. At methionine 1–arginine 103 the chain is on the cytoplasmic side. The segment covering tyrosine 39–asparagine 53 has biased composition (basic and acidic residues). A compositionally biased stretch (polar residues) spans alanine 56–proline 75. A helical membrane pass occupies residues leucine 104–proline 124. The Extracellular portion of the chain corresponds to leucine 125–glutamate 374. The region spanning serine 126 to tyrosine 197 is the POTRA domain. Residues lysine 325–glutamate 374 form a disordered region. Residues glutamate 326–alanine 339 show a composition bias toward acidic residues. Positions glycine 356 to glutamate 374 are enriched in polar residues.

This sequence belongs to the FtsQ/DivIB family. DivIB subfamily.

Its subcellular location is the cell membrane. Its function is as follows. Cell division protein that may be involved in stabilizing or promoting the assembly of the division complex. In Enterococcus faecalis (strain 62), this protein is Cell division protein DivIB.